We begin with the raw amino-acid sequence, 332 residues long: Fructose-1,6-bisphosphatase class 1 (332 aa).

The Mg(2+) site is built by Glu89, Asp110, Leu112, and Asp113. Substrate-binding positions include Asp113 to Ser116, Asn206, Tyr239, Tyr257 to Tyr259, and Lys269. Residue Glu275 coordinates Mg(2+).

Belongs to the FBPase class 1 family. Homotetramer. Mg(2+) is required as a cofactor.

Its subcellular location is the cytoplasm. The catalysed reaction is beta-D-fructose 1,6-bisphosphate + H2O = beta-D-fructose 6-phosphate + phosphate. It functions in the pathway carbohydrate biosynthesis; gluconeogenesis. This chain is Fructose-1,6-bisphosphatase class 1, found in Klebsiella pneumoniae (strain 342).